We begin with the raw amino-acid sequence, 241 residues long: 1-(5-phosphoribosyl)-5-[(5-phosphoribosylamino)methylideneamino] imidazole-4-carboxamide isomerase (241 aa).

Asp8 functions as the Proton acceptor in the catalytic mechanism. Asp130 acts as the Proton donor in catalysis.

Belongs to the HisA/HisF family.

The protein resides in the cytoplasm. It catalyses the reaction 1-(5-phospho-beta-D-ribosyl)-5-[(5-phospho-beta-D-ribosylamino)methylideneamino]imidazole-4-carboxamide = 5-[(5-phospho-1-deoxy-D-ribulos-1-ylimino)methylamino]-1-(5-phospho-beta-D-ribosyl)imidazole-4-carboxamide. Its pathway is amino-acid biosynthesis; L-histidine biosynthesis; L-histidine from 5-phospho-alpha-D-ribose 1-diphosphate: step 4/9. The polypeptide is 1-(5-phosphoribosyl)-5-[(5-phosphoribosylamino)methylideneamino] imidazole-4-carboxamide isomerase (Leptospira interrogans serogroup Icterohaemorrhagiae serovar copenhageni (strain Fiocruz L1-130)).